We begin with the raw amino-acid sequence, 455 residues long: Glutamyl-tRNA reductase (455 aa).

Residues 49–52 (TCNR), Ser109, 114–116 (ETQ), and Gln120 contribute to the substrate site. Cys50 acts as the Nucleophile in catalysis. Residue 189–194 (GAGKMG) coordinates NADP(+).

The protein belongs to the glutamyl-tRNA reductase family. Homodimer.

The catalysed reaction is (S)-4-amino-5-oxopentanoate + tRNA(Glu) + NADP(+) = L-glutamyl-tRNA(Glu) + NADPH + H(+). Its pathway is porphyrin-containing compound metabolism; protoporphyrin-IX biosynthesis; 5-aminolevulinate from L-glutamyl-tRNA(Glu): step 1/2. Functionally, catalyzes the NADPH-dependent reduction of glutamyl-tRNA(Glu) to glutamate 1-semialdehyde (GSA). The protein is Glutamyl-tRNA reductase of Bacillus subtilis (strain 168).